The following is a 458-amino-acid chain: tRNA modification GTPase MnmE (458 aa).

Residues R26, E88, and R127 each contribute to the (6S)-5-formyl-5,6,7,8-tetrahydrofolate site. A TrmE-type G domain is found at 224–378 (GLSTAIIGRP…IEDRINQLFF (155 aa)). A K(+)-binding site is contributed by N234. GTP is bound by residues 234-239 (NVGKSS), 253-259 (TDIAGTT), and 278-281 (DTAG). S238 provides a ligand contact to Mg(2+). 3 residues coordinate K(+): T253, I255, and T258. Position 259 (T259) interacts with Mg(2+). A (6S)-5-formyl-5,6,7,8-tetrahydrofolate-binding site is contributed by K458.

Belongs to the TRAFAC class TrmE-Era-EngA-EngB-Septin-like GTPase superfamily. TrmE GTPase family. In terms of assembly, homodimer. Heterotetramer of two MnmE and two MnmG subunits. K(+) is required as a cofactor.

It is found in the cytoplasm. Its function is as follows. Exhibits a very high intrinsic GTPase hydrolysis rate. Involved in the addition of a carboxymethylaminomethyl (cmnm) group at the wobble position (U34) of certain tRNAs, forming tRNA-cmnm(5)s(2)U34. The chain is tRNA modification GTPase MnmE from Streptococcus pyogenes serotype M5 (strain Manfredo).